Consider the following 138-residue polypeptide: Basic phospholipase A2 homolog Ts-K49b (138 aa).

A signal peptide spans 1-16; sequence MRTLWIMAVLLVGVEG. 6 disulfide bridges follow: cysteine 42-cysteine 131, cysteine 44-cysteine 60, cysteine 65-cysteine 138, cysteine 66-cysteine 104, cysteine 73-cysteine 97, and cysteine 91-cysteine 102. The segment at 121–133 is important for membrane-damaging activities in eukaryotes and bacteria; heparin-binding; that stretch reads KKKKINLKLFCKK.

Expressed by the venom gland.

Its subcellular location is the secreted. In terms of biological role, snake venom phospholipase A2 homolog that lacks catalytic activity. It shows myotoxic and weak anticoagulant activities. A model of myotoxic mechanism has been proposed: an apo Lys49-PLA2 is activated by the entrance of a hydrophobic molecule (e.g. fatty acid) at the hydrophobic channel of the protein leading to a reorientation of a monomer. This reorientation causes a transition between 'inactive' to 'active' states, causing alignment of C-terminal and membrane-docking sites (MDoS) side-by-side and putting the membrane-disruption sites (MDiS) in the same plane, exposed to solvent and in a symmetric position for both monomers. The MDoS region stabilizes the toxin on membrane by the interaction of charged residues with phospholipid head groups. Subsequently, the MDiS region destabilizes the membrane with penetration of hydrophobic residues. This insertion causes a disorganization of the membrane, allowing an uncontrolled influx of ions (i.e. calcium and sodium), and eventually triggering irreversible intracellular alterations and cell death. The polypeptide is Basic phospholipase A2 homolog Ts-K49b (Trimeresurus stejnegeri (Chinese green tree viper)).